The primary structure comprises 951 residues: Multiple C2 and transmembrane domain-containing protein 1 (951 aa).

Disordered regions lie at residues 29–79, 92–117, 129–198, and 210–231; these read LGVG…RWSG, SSSQ…AEQG, LPVA…QKSS, and LEPA…ALQK. The segment covering 31-43 has biased composition (gly residues); the sequence is VGKGKGGGGGRAG. Positions 147–168 are enriched in low complexity; the sequence is PGGRSPDSAPSSSSASSSLSSS. Positions 174-184 are enriched in basic and acidic residues; that stretch reads RGDRVRDESTR. Residues 219–228 show a composition bias toward low complexity; that stretch reads PARGPAEPQA. C2 domains follow at residues 240–358, 404–521, and 555–676; these read KIST…DVTL, QTQS…KLEL, and QKER…AYVL. Positions 275, 281, 328, 330, 336, 438, 444, 491, 493, 499, 594, 600, 646, 648, and 654 each coordinate Ca(2+). Transmembrane regions (helical) follow at residues 763 to 783 and 866 to 886; these read FVLF…LLLL and PFLS…LYFI.

The protein belongs to the MCTP family. Ca(2+) is required as a cofactor.

It is found in the cytoplasmic vesicle. The protein localises to the secretory vesicle. It localises to the synaptic vesicle membrane. Its subcellular location is the recycling endosome. The protein resides in the endoplasmic reticulum membrane. In terms of biological role, calcium sensor which is essential for the stabilization of normal baseline neurotransmitter release and for the induction and long-term maintenance of presynaptic homeostatic plasticity. The chain is Multiple C2 and transmembrane domain-containing protein 1 from Mus musculus (Mouse).